The primary structure comprises 361 residues: Peptide chain release factor 1 (361 aa).

Position 237 is an N5-methylglutamine (Gln237). Positions 284-296 (EDEKRRSEEDSTR) are enriched in basic and acidic residues. The tract at residues 284 to 305 (EDEKRRSEEDSTRRNLVSSGDR) is disordered.

It belongs to the prokaryotic/mitochondrial release factor family. In terms of processing, methylated by PrmC. Methylation increases the termination efficiency of RF1.

Its subcellular location is the cytoplasm. Its function is as follows. Peptide chain release factor 1 directs the termination of translation in response to the peptide chain termination codons UAG and UAA. In Shewanella piezotolerans (strain WP3 / JCM 13877), this protein is Peptide chain release factor 1.